Reading from the N-terminus, the 470-residue chain is Putative F-box/LRR-repeat protein At3g58920 (470 aa).

The F-box domain occupies 1–53 (MDRISNLPNEIICHIVSFLSAKEAAFASVLSKRWQNLFTIVQKLEFDDSVKNQ). LRR repeat units follow at residues 114–142 (KLEI…KLTS), 143–170 (CIFA…FLKS), 173–198 (FSDL…TIYD), 225–250 (FTYF…KYID), 287–312 (EDDP…HLST), and 342–367 (YECF…MIKG).

In Arabidopsis thaliana (Mouse-ear cress), this protein is Putative F-box/LRR-repeat protein At3g58920.